Reading from the N-terminus, the 212-residue chain is Ras-related protein Rab-43 (212 aa).

Residue 25-32 participates in GTP binding; the sequence is GDASVGKT. The Effector region motif lies at 47–55; the sequence is QGSTIGVDF. Phosphoserine is present on S49. 73–77 contacts GTP; sequence DTAGQ. T82 carries the post-translational modification Phosphothreonine; by LRRK2. GTP contacts are provided by residues 131 to 134 and 163 to 164; these read NKSD and AK. At S193 the chain carries Phosphoserine. S-geranylgeranyl cysteine attachment occurs at residues C210 and C212. C212 carries the post-translational modification Cysteine methyl ester.

It belongs to the small GTPase superfamily. Rab family. Interacts with GDI1, GDI2, CHM and CHML; phosphorylation at Thr-82 disrupts these interactions. Widely expressed in brain, testis, lung, heart, ovary, colon, kidney, uterus and spleen but not in liver.

It is found in the cytoplasmic vesicle. The protein localises to the phagosome. It localises to the phagosome membrane. The protein resides in the golgi apparatus. Its subcellular location is the trans-Golgi network membrane. It is found in the trans-Golgi network. In terms of biological role, the small GTPases Rab are key regulators of intracellular membrane trafficking, from the formation of transport vesicles to their fusion with membranes. Rabs cycle between an inactive GDP-bound form and an active GTP-bound form that is able to recruit to membranes different set of downstream effectors directly responsible for vesicle formation, movement, tethering and fusion. The low intrinsic GTPase activity of RAB43 is activated by USP6NL. Involved in retrograde transport from the endocytic pathway to the Golgi apparatus. Involved in the transport of Shiga toxin from early and recycling endosomes to the trans-Golgi network. Required for the structural integrity of the Golgi complex. Plays a role in the maturation of phagosomes that engulf pathogens, such as S.aureus and M.tuberculosis. This Homo sapiens (Human) protein is Ras-related protein Rab-43 (RAB43).